The following is a 215-amino-acid chain: MAKPLTERFFIPKELKVFGRWSVEDVTVNDPSLRPYIALEPRILPHSHGRHAKKPFGKAQVHIVERLINKVMRSGASHYKAGGHFMRREHRSIMSKKMKAYEVVKEAFMIIERRTKQNPIQVLIRAIENSAPREDTTTIAFGGIRYHMAVDVSPLRRLDVALKNIALGASIKCYRNKTTYAQALAEEIIAAANRDPKSFAYSKKEEIERIAQSSR.

Belongs to the universal ribosomal protein uS7 family. In terms of assembly, part of the 30S ribosomal subunit.

Its function is as follows. One of the primary rRNA binding proteins, it binds directly to 16S rRNA where it nucleates assembly of the head domain of the 30S subunit. Is located at the subunit interface close to the decoding center. The polypeptide is Small ribosomal subunit protein uS7 (Thermococcus gammatolerans (strain DSM 15229 / JCM 11827 / EJ3)).